The sequence spans 290 residues: uncharacterized protein (290 aa).

Disordered stretches follow at residues 1-98 (MLGQ…SRRV) and 209-236 (LSGQ…AATT). The segment covering 63–76 (KPDRVRPGQRDRIG) has biased composition (basic and acidic residues). Residues 87–97 (AGQARAASSRR) show a composition bias toward low complexity. A helical membrane pass occupies residues 261–281 (CILTALLAVSFHSIGVVIMTS).

The protein localises to the membrane. This is an uncharacterized protein from Homo sapiens (Human).